Reading from the N-terminus, the 186-residue chain is Ribosome maturation factor RimM (186 aa).

In terms of domain architecture, PRC barrel spans 93 to 166 (PDEYYDHQLM…RAVIDPPPGL (74 aa)). Residues 160-186 (IDPPPGLIDDRAEVDSSDTEAATEADA) are disordered. Residues 174–186 (DSSDTEAATEADA) are compositionally biased toward acidic residues.

This sequence belongs to the RimM family. As to quaternary structure, binds ribosomal protein uS19.

Its subcellular location is the cytoplasm. Its function is as follows. An accessory protein needed during the final step in the assembly of 30S ribosomal subunit, possibly for assembly of the head region. Essential for efficient processing of 16S rRNA. May be needed both before and after RbfA during the maturation of 16S rRNA. It has affinity for free ribosomal 30S subunits but not for 70S ribosomes. This chain is Ribosome maturation factor RimM, found in Streptomyces avermitilis (strain ATCC 31267 / DSM 46492 / JCM 5070 / NBRC 14893 / NCIMB 12804 / NRRL 8165 / MA-4680).